A 122-amino-acid chain; its full sequence is RING-box protein 1B (122 aa).

The segment covering 1–23 (MAEEIEVEETEDFHDMDFNDEEP) has biased composition (acidic residues). The disordered stretch occupies residues 1–28 (MAEEIEVEETEDFHDMDFNDEEPSCSGG). Positions 57, 60, 68, 71, 82, 89, 91, 94, 96, 108, and 111 each coordinate Zn(2+). The segment at 57–112 (CAICRNHIMNLCIECQADPNANQDECTVAWGECNHAFHYHCIARWLKTRLVCPLDN) adopts an RING-type zinc-finger fold.

Belongs to the RING-box family. In terms of assembly, part of a SCF complex consisting of Skpa (SKP1), Cul1, Roc1B and a F-box protein. As to expression, highly expressed in early embryos, and in pupae. Widely expressed in adult males, while it is weakly expressed in adult females.

The protein resides in the cytoplasm. Its subcellular location is the nucleus. It functions in the pathway protein modification; protein ubiquitination. Functionally, component of the SCF (SKP1-CUL1-F-box protein) E3 ubiquitin ligase complex, which mediates the ubiquitination and subsequent proteasomal degradation of target proteins. Through the RING-type zinc finger, seems to recruit the E2 ubiquitination enzyme to the complex and brings it into close proximity to the substrate. This is RING-box protein 1B (Roc1b) from Drosophila melanogaster (Fruit fly).